The primary structure comprises 473 residues: Sensor histidine kinase YclK (473 aa).

Over 1-9 the chain is Cytoplasmic; the sequence is MMKIKYLYQ. A helical membrane pass occupies residues 10–30; that stretch reads LLLSHISILILAFVIIISLFS. Residues 31-164 lie on the Extracellular side of the membrane; it reads HFVKEFAYQN…GVEQMVNQVN (134 aa). Residues 165-185 traverse the membrane as a helical segment; it reads LYMFYAVISTLVITILVSWLL. Topologically, residues 186–473 are cytoplasmic; the sequence is SKFHVKRIQK…IRLPLTAKQQ (288 aa). An HAMP domain is found at 187–239; that stretch reads KFHVKRIQKLREATDKVASGDYDIHLENSYGDEIGVLASDFNIMAKKLKQSRD. The Histidine kinase domain maps to 254-470; the sequence is DVSHELKTPL…KFIIRLPLTA (217 aa). Residue histidine 257 is modified to Phosphohistidine; by autocatalysis.

It is found in the cell membrane. It catalyses the reaction ATP + protein L-histidine = ADP + protein N-phospho-L-histidine.. Functionally, could be member of the two-component regulatory system YclK/YclJ. Potentially phosphorylates YclJ. In Bacillus subtilis (strain 168), this protein is Sensor histidine kinase YclK (yclK).